The following is a 311-amino-acid chain: Beta-lactamase (311 aa).

The tat-type signal signal peptide spans 1-36 (MRKPTSSLTRRSVLGAGLGLGGALALGSTTASAASA). Residue Ser86 is the Acyl-ester intermediate of the active site. Residue 252–254 (KSG) participates in substrate binding.

Belongs to the class-A beta-lactamase family. Post-translationally, predicted to be exported by the Tat system. The position of the signal peptide cleavage has not been experimentally proven.

It catalyses the reaction a beta-lactam + H2O = a substituted beta-amino acid. Hydrolyzes benzylpenicillin and cloxacillin (at 10% of the rate of benzylpenicillin). The sequence is that of Beta-lactamase (bla) from Streptomyces cellulosae.